We begin with the raw amino-acid sequence, 307 residues long: Ribonuclease Z (307 aa).

Residues His-63, His-65, Asp-67, His-68, His-141, Asp-212, and His-270 each contribute to the Zn(2+) site. Asp-67 functions as the Proton acceptor in the catalytic mechanism.

Belongs to the RNase Z family. In terms of assembly, homodimer. The cofactor is Zn(2+).

The catalysed reaction is Endonucleolytic cleavage of RNA, removing extra 3' nucleotides from tRNA precursor, generating 3' termini of tRNAs. A 3'-hydroxy group is left at the tRNA terminus and a 5'-phosphoryl group is left at the trailer molecule.. Functionally, zinc phosphodiesterase, which displays some tRNA 3'-processing endonuclease activity. Probably involved in tRNA maturation, by removing a 3'-trailer from precursor tRNA. The chain is Ribonuclease Z from Bacillus cereus (strain B4264).